The sequence spans 229 residues: UPF0488 protein C8orf33 (229 aa).

Residues 1-16 are compositionally biased toward low complexity; the sequence is MAALGHLAGEAAAAPG. Residues 1 to 96 are disordered; it reads MAALGHLAGE…GEKASEKLAP (96 aa). Position 2 is an N-acetylalanine (alanine 2). An Omega-N-methylarginine modification is found at arginine 27. Positions 69–79 are enriched in basic residues; sequence KKQKNKKKTRN. Serine 82 carries the phosphoserine modification.

This sequence belongs to the UPF0488 family.

The protein is UPF0488 protein C8orf33 (C8orf33) of Homo sapiens (Human).